The following is a 227-amino-acid chain: Glutathione S-transferase U18 (227 aa).

In terms of domain architecture, GST N-terminal spans 4 to 83 (EDVKLIGSWA…YIDEAWNSSG (80 aa)). Glutathione contacts are provided by residues 14–15 (SV), 40–41 (SK), 54–55 (KM), and 67–68 (ES). The GST C-terminal domain occupies 90 to 221 (HPYDRAIARF…TKLAEFARKL (132 aa)).

Belongs to the GST superfamily. Tau family.

Its subcellular location is the cytoplasm. It is found in the cytosol. It catalyses the reaction RX + glutathione = an S-substituted glutathione + a halide anion + H(+). May be involved in the conjugation of reduced glutathione to a wide number of exogenous and endogenous hydrophobic electrophiles and have a detoxification role against certain herbicides. The sequence is that of Glutathione S-transferase U18 (GSTU18) from Arabidopsis thaliana (Mouse-ear cress).